A 251-amino-acid chain; its full sequence is Zinc import ATP-binding protein ZnuC (251 aa).

An ABC transporter domain is found at 5-220 (VSLENVSVSF…PEFISMFGPR (216 aa)). Residue 37–44 (GPNGAGKS) participates in ATP binding.

It belongs to the ABC transporter superfamily. Zinc importer (TC 3.A.1.15.5) family. The complex is composed of two ATP-binding proteins (ZnuC), two transmembrane proteins (ZnuB) and a solute-binding protein (ZnuA).

The protein localises to the cell inner membrane. It carries out the reaction Zn(2+)(out) + ATP(in) + H2O(in) = Zn(2+)(in) + ADP(in) + phosphate(in) + H(+)(in). Its function is as follows. Part of the ABC transporter complex ZnuABC involved in zinc import. Responsible for energy coupling to the transport system. The polypeptide is Zinc import ATP-binding protein ZnuC (Escherichia coli O157:H7).